Consider the following 191-residue polypeptide: uncharacterized protein (191 aa).

Helical transmembrane passes span 4–24, 26–46, 68–88, 90–110, 135–155, and 168–188; these read IYRQTIHLVFGVLIAFSVLIF, KQLIIPLIVSIVIGICLYFLC, GKGAIYFAIGMLISLILIDDI, AVFFGILVFAVGDSLATIIGI, LILYPFYGTYGIFVALISAFI, and LYLPFIVAFIINHQINICSLM.

The protein localises to the cell membrane. This is an uncharacterized protein from Methanocaldococcus jannaschii (strain ATCC 43067 / DSM 2661 / JAL-1 / JCM 10045 / NBRC 100440) (Methanococcus jannaschii).